A 108-amino-acid polypeptide reads, in one-letter code: ATP-dependent Clp protease adapter protein ClpS (108 aa).

The protein belongs to the ClpS family. Binds to the N-terminal domain of the chaperone ClpA.

In terms of biological role, involved in the modulation of the specificity of the ClpAP-mediated ATP-dependent protein degradation. The polypeptide is ATP-dependent Clp protease adapter protein ClpS (Ralstonia nicotianae (strain ATCC BAA-1114 / GMI1000) (Ralstonia solanacearum)).